Here is a 428-residue protein sequence, read N- to C-terminus: Tyrosine--tRNA ligase (428 aa).

Tyr-34 is a binding site for L-tyrosine. The short motif at 39–48 (PTADSLHIGH) is the 'HIGH' region element. L-tyrosine-binding residues include Tyr-171 and Gln-175. A 'KMSKS' region motif is present at residues 236 to 240 (KFGKT). An ATP-binding site is contributed by Lys-239. The S4 RNA-binding domain maps to 358-424 (VGLIDLLVDA…GKKKYFLIQV (67 aa)).

Belongs to the class-I aminoacyl-tRNA synthetase family. TyrS type 1 subfamily. Homodimer.

The protein localises to the cytoplasm. It catalyses the reaction tRNA(Tyr) + L-tyrosine + ATP = L-tyrosyl-tRNA(Tyr) + AMP + diphosphate + H(+). Catalyzes the attachment of tyrosine to tRNA(Tyr) in a two-step reaction: tyrosine is first activated by ATP to form Tyr-AMP and then transferred to the acceptor end of tRNA(Tyr). The polypeptide is Tyrosine--tRNA ligase (Oceanobacillus iheyensis (strain DSM 14371 / CIP 107618 / JCM 11309 / KCTC 3954 / HTE831)).